Consider the following 165-residue polypeptide: Chemotaxis protein CheW (165 aa).

Belongs to the CheW family.

Functionally, plays an essential role in chemotaxis signal transduction system in order to colonize the host stomach. This chain is Chemotaxis protein CheW, found in Helicobacter pylori (strain ATCC 700392 / 26695) (Campylobacter pylori).